Here is a 215-residue protein sequence, read N- to C-terminus: Small ribosomal subunit protein uS3 (215 aa).

A KH type-2 domain is found at 39-107; that stretch reads VRQYLQKRLA…PVHINIEEIR (69 aa).

The protein belongs to the universal ribosomal protein uS3 family. Part of the 30S ribosomal subunit. Forms a tight complex with proteins S10 and S14.

Binds the lower part of the 30S subunit head. Binds mRNA in the 70S ribosome, positioning it for translation. This Nitrosomonas eutropha (strain DSM 101675 / C91 / Nm57) protein is Small ribosomal subunit protein uS3.